A 121-amino-acid polypeptide reads, in one-letter code: Small ribosomal subunit protein bS6 (121 aa).

The disordered stretch occupies residues 99–121; sequence PLPAPRVAPGTEAPAEPEAAAPA. A compositionally biased stretch (low complexity) spans 110 to 121; sequence EAPAEPEAAAPA.

This sequence belongs to the bacterial ribosomal protein bS6 family.

Its function is as follows. Binds together with bS18 to 16S ribosomal RNA. This is Small ribosomal subunit protein bS6 from Synechococcus sp. (strain CC9311).